A 173-amino-acid polypeptide reads, in one-letter code: Ribulose bisphosphate carboxylase small subunit, chloroplastic 3 (173 aa).

Residues 1–49 constitute a chloroplast transit peptide; that stretch reads MASIPATVATVAQANMVAPFTGLKSNAAFPVTKKVNDFSTLPSNGGRVQ.

This sequence belongs to the RuBisCO small chain family. Heterohexadecamer of 8 large and 8 small subunits.

It localises to the plastid. The protein localises to the chloroplast. In terms of biological role, ruBisCO catalyzes two reactions: the carboxylation of D-ribulose 1,5-bisphosphate, the primary event in carbon dioxide fixation, as well as the oxidative fragmentation of the pentose substrate. Both reactions occur simultaneously and in competition at the same active site. Although the small subunit is not catalytic it is essential for maximal activity. This chain is Ribulose bisphosphate carboxylase small subunit, chloroplastic 3, found in Flaveria pringlei.